We begin with the raw amino-acid sequence, 483 residues long: UDP-N-acetylmuramyl-tripeptide synthetase (483 aa).

Serine 43 is a binding site for UDP-N-acetyl-alpha-D-muramoyl-L-alanyl-D-glutamate. 116 to 122 contributes to the ATP binding site; that stretch reads GTKGKTT. Residues 160 to 161, serine 187, and arginine 195 contribute to the UDP-N-acetyl-alpha-D-muramoyl-L-alanyl-D-glutamate site; that span reads TT. An N6-carboxylysine modification is found at lysine 229.

This sequence belongs to the MurCDEF family. MurE subfamily. Carboxylation is probably crucial for Mg(2+) binding and, consequently, for the gamma-phosphate positioning of ATP.

The protein resides in the cytoplasm. The protein operates within cell wall biogenesis; peptidoglycan biosynthesis. Functionally, catalyzes the addition of an amino acid to the nucleotide precursor UDP-N-acetylmuramoyl-L-alanyl-D-glutamate (UMAG) in the biosynthesis of bacterial cell-wall peptidoglycan. The polypeptide is UDP-N-acetylmuramyl-tripeptide synthetase (Lactococcus lactis subsp. cremoris (strain MG1363)).